Here is a 113-residue protein sequence, read N- to C-terminus: Cytochrome c2 (113 aa).

Heme c-binding residues include cysteine 15, cysteine 18, histidine 19, and methionine 92.

The protein belongs to the cytochrome c family. In terms of processing, binds 1 heme c group covalently per subunit.

Cytochrome c2 is found mainly in purple, non-sulfur, photosynthetic bacteria where it functions as the electron donor to the oxidized bacteriochlorophyll in the photophosphorylation pathway. However, it may also have a role in the respiratory chain and is found in some non-photosynthetic bacteria. This Pararhodospirillum photometricum (Rhodospirillum photometricum) protein is Cytochrome c2.